The sequence spans 244 residues: rRNA adenine N-6-methyltransferase (244 aa).

The S-adenosyl-L-methionine site is built by asparagine 11, isoleucine 13, glycine 38, glutamate 59, aspartate 84, and serine 101.

The protein belongs to the class I-like SAM-binding methyltransferase superfamily. rRNA adenine N(6)-methyltransferase family.

Functionally, involved in erythromycin resistance. The sequence is that of rRNA adenine N-6-methyltransferase (ermG) from Lysinibacillus sphaericus (Bacillus sphaericus).